Reading from the N-terminus, the 112-residue chain is UPF0212 protein Mhun_0078 (112 aa).

This sequence belongs to the UPF0212 family.

The sequence is that of UPF0212 protein Mhun_0078 from Methanospirillum hungatei JF-1 (strain ATCC 27890 / DSM 864 / NBRC 100397 / JF-1).